The primary structure comprises 465 residues: Cysteine--tRNA ligase (465 aa).

Zn(2+) is bound at residue C27. Residues 29–39 (PTVYNFFHIGN) carry the 'HIGH' region motif. Zn(2+) is bound by residues C207, H232, and E236. The short motif at 264-268 (KMSKS) is the 'KMSKS' region element. K267 contributes to the ATP binding site.

Belongs to the class-I aminoacyl-tRNA synthetase family. In terms of assembly, monomer. Zn(2+) is required as a cofactor.

It localises to the cytoplasm. It carries out the reaction tRNA(Cys) + L-cysteine + ATP = L-cysteinyl-tRNA(Cys) + AMP + diphosphate. This Clostridium botulinum (strain Langeland / NCTC 10281 / Type F) protein is Cysteine--tRNA ligase.